A 229-amino-acid polypeptide reads, in one-letter code: MKFFKGKKDKTLDEAYDTLEKSVKGIDENIEKYNKELNVIKQKIEEEKKKNPINQHIINSLRNKAANIIQKKKVYENNKESTMGIQFNIDQIKYANDNVQLSIDTYKALKNTSKVLKKNIKKVNINKIEKLQDDLFDYIEDTKEIGNILSSSYDIPLNLDEQEIDAELALIEDSILDENVEQDNIASYIEDDKKEEDKNLLQQIPVEEKNFDAIQQKTKKETYFAQKES.

The stretch at Y16–N78 forms a coiled coil.

Belongs to the SNF7 family.

The chain is Putative vacuolar protein sorting-associated protein 60 (VPS60) from Plasmodium falciparum (isolate 3D7).